We begin with the raw amino-acid sequence, 198 residues long: Recombination protein RecR (198 aa).

A C4-type zinc finger spans residues 56-71; it reads CHVCGNVDTGDPCGIC. Residues 79 to 174 form the Toprim domain; it reads RMLCVVEEVA…RLTQLAHGLP (96 aa).

This sequence belongs to the RecR family.

Its function is as follows. May play a role in DNA repair. It seems to be involved in an RecBC-independent recombinational process of DNA repair. It may act with RecF and RecO. In Rhizorhabdus wittichii (strain DSM 6014 / CCUG 31198 / JCM 15750 / NBRC 105917 / EY 4224 / RW1) (Sphingomonas wittichii), this protein is Recombination protein RecR.